The sequence spans 261 residues: Carnitinyl-CoA dehydratase (261 aa).

The Nucleophile role is filled by Glu-111. Catalysis depends on Glu-131, which acts as the Proton acceptor.

This sequence belongs to the enoyl-CoA hydratase/isomerase family.

It carries out the reaction (R)-carnitinyl-CoA = crotonobetainyl-CoA + H2O. Its pathway is amine and polyamine metabolism; carnitine metabolism. Functionally, catalyzes the reversible dehydration of L-carnitinyl-CoA to crotonobetainyl-CoA. This is Carnitinyl-CoA dehydratase from Salmonella typhi.